We begin with the raw amino-acid sequence, 335 residues long: UPF0104 membrane protein PH1989 (335 aa).

8 helical membrane-spanning segments follow: residues 4-24 (YLLI…AGIE), 34-54 (DIRF…IWAV), 62-82 (GANI…GIFL), 122-142 (ILDV…ALTI), 148-168 (LIIL…TTVF), 231-251 (LYSF…FLSL), 266-286 (ASIA…TEVV), and 304-324 (VTML…GILV).

This sequence belongs to the UPF0104 family.

Its subcellular location is the cell membrane. This chain is UPF0104 membrane protein PH1989, found in Pyrococcus horikoshii (strain ATCC 700860 / DSM 12428 / JCM 9974 / NBRC 100139 / OT-3).